A 362-amino-acid polypeptide reads, in one-letter code: Trans-enoyl reductase phm4 (362 aa).

50–53 (VDAK) contributes to the NADP(+) binding site. A substrate-binding site is contributed by 136–143 (TCFMTCGL). NADP(+) is bound by residues 171–174 (ATAT), 194–197 (SPHS), Tyr-212, and 259–260 (LD). 280–284 (GPIML) contacts substrate. An NADP(+)-binding site is contributed by 349–350 (VN).

The protein belongs to the zinc-containing alcohol dehydrogenase family. In terms of assembly, monomer.

It functions in the pathway secondary metabolite biosynthesis. In terms of biological role, trans-enoyl reductase; part of the gene cluster that mediates the biosynthesis of the trans-fused decalin-containing tetramic acid phomasetin, the stereochemical opposite of the HIV-1 integrase inhibitor equisetin. The PKS module of phm1 together with the enoylreductase phm4 catalyze the formation of the polyketide unit which is then conjugated to L-serine by the condensation domain of the phm1 NRPS module. Activity of the Dieckmann cyclase domain (RED) of phm1 results in release of the Dieckmann product intermediate. The Diels-Alderase phm7 then uses the Dieckmann product of phm1 as substrate and catalyzes the Diels-Alder cycloaddition to form the decalin ring of N-desmethylphomasetin. N-desmethylphomasetin is further methylated to phomasetin by the methyltransferase phm5. The sequence is that of Trans-enoyl reductase phm4 from Pyrenochaetopsis sp.